The sequence spans 200 residues: Holliday junction branch migration complex subunit RuvA (200 aa).

The domain I stretch occupies residues 1–64 (MLSYLSGTLI…EDALQLYGFI (64 aa)). Residues 65–143 (TTEDREVFKL…KLDLKIDIKE (79 aa)) are domain II. Residues 144–148 (TAFRS) form a flexible linker region. Residues 149–200 (DKQQVRNDAYSALISLGFTKSIAEKAMRAAIAEVPDGSVDDLIRVALRHVQS) are domain III.

This sequence belongs to the RuvA family. In terms of assembly, homotetramer. Forms an RuvA(8)-RuvB(12)-Holliday junction (HJ) complex. HJ DNA is sandwiched between 2 RuvA tetramers; dsDNA enters through RuvA and exits via RuvB. An RuvB hexamer assembles on each DNA strand where it exits the tetramer. Each RuvB hexamer is contacted by two RuvA subunits (via domain III) on 2 adjacent RuvB subunits; this complex drives branch migration. In the full resolvosome a probable DNA-RuvA(4)-RuvB(12)-RuvC(2) complex forms which resolves the HJ.

Its subcellular location is the cytoplasm. The RuvA-RuvB-RuvC complex processes Holliday junction (HJ) DNA during genetic recombination and DNA repair, while the RuvA-RuvB complex plays an important role in the rescue of blocked DNA replication forks via replication fork reversal (RFR). RuvA specifically binds to HJ cruciform DNA, conferring on it an open structure. The RuvB hexamer acts as an ATP-dependent pump, pulling dsDNA into and through the RuvAB complex. HJ branch migration allows RuvC to scan DNA until it finds its consensus sequence, where it cleaves and resolves the cruciform DNA. The chain is Holliday junction branch migration complex subunit RuvA from Chloroherpeton thalassium (strain ATCC 35110 / GB-78).